A 117-amino-acid polypeptide reads, in one-letter code: Large ribosomal subunit protein bL17 (117 aa).

Belongs to the bacterial ribosomal protein bL17 family. As to quaternary structure, part of the 50S ribosomal subunit. Contacts protein L32.

The protein is Large ribosomal subunit protein bL17 of Endomicrobium trichonymphae.